A 169-amino-acid chain; its full sequence is Cyclic pyranopterin monophosphate synthase (169 aa).

Residues 83-85 and 121-122 each bind substrate; these read LCH and ME. Asp-136 is an active-site residue.

This sequence belongs to the MoaC family. In terms of assembly, homohexamer; trimer of dimers.

It catalyses the reaction (8S)-3',8-cyclo-7,8-dihydroguanosine 5'-triphosphate = cyclic pyranopterin phosphate + diphosphate. It participates in cofactor biosynthesis; molybdopterin biosynthesis. In terms of biological role, catalyzes the conversion of (8S)-3',8-cyclo-7,8-dihydroguanosine 5'-triphosphate to cyclic pyranopterin monophosphate (cPMP). In Rhodospirillum centenum (strain ATCC 51521 / SW), this protein is Cyclic pyranopterin monophosphate synthase.